An 86-amino-acid chain; its full sequence is Small ribosomal subunit protein uS15 (86 aa).

The protein belongs to the universal ribosomal protein uS15 family. As to quaternary structure, part of the 30S ribosomal subunit. Forms a bridge to the 50S subunit in the 70S ribosome, contacting the 23S rRNA.

One of the primary rRNA binding proteins, it binds directly to 16S rRNA where it helps nucleate assembly of the platform of the 30S subunit by binding and bridging several RNA helices of the 16S rRNA. Its function is as follows. Forms an intersubunit bridge (bridge B4) with the 23S rRNA of the 50S subunit in the ribosome. The polypeptide is Small ribosomal subunit protein uS15 (Vesicomyosocius okutanii subsp. Calyptogena okutanii (strain HA)).